Here is a 2773-residue protein sequence, read N- to C-terminus: Peramine synthetase A (2773 aa).

The interval F246–R644 is adenylation 1. A Carrier 1 domain is found at Q774–L850. At S811 the chain carries O-(pantetheine 4'-phosphoryl)serine. The condensation stretch occupies residues Q888 to I1301. The tract at residues A1321–R1720 is adenylation 2. The segment at I1810 to S1949 is methylation (Met) domain. Residues M2250–A2271 are disordered. Residues L2267–V2345 form the Carrier 2 domain. At S2304 the chain carries O-(pantetheine 4'-phosphoryl)serine. Residues T2397–S2715 are thiesterase (TE) domain.

This sequence belongs to the NRP synthetase family. Requires pantetheine 4'-phosphate as cofactor.

The catalysed reaction is (S)-1-pyrroline-5-carboxylate + L-arginine + S-adenosyl-L-methionine + 2 ATP = peramine + 2 AMP + S-adenosyl-L-homocysteine + 2 diphosphate + H2O + 2 H(+). In terms of biological role, nonribosomal peptide synthetase involved in the biosynthesis of peramine, a pyrrolopyrazine synthesized in association with the grass host that protects the plant from insect herbivory. The single multifunctional NRPS perA seems to be responsible for all catalytic steps in the biosynthesis of peramine. The condensation domain of perA is proposed to catalyze formation of a peptide bond between 1-pyrroline-5-carboxylate and arginine. The methylation domain of perA would catalyze the N-methylation of the alpha-amino group of arginine. The reductase domain is proposed to be responsible for reduction of the thioester and the cyclization to form an iminium ion resulting in release from the peptide synthetase. Deprotonation of this intermediate and oxidation of the pyrroline ring would give rise to peramine. This final oxidation to give the pyrrole functionality may be spontaneous. The polypeptide is Peramine synthetase A (Epichloe festucae (strain Fl1)).